Here is a 249-residue protein sequence, read N- to C-terminus: Pyridoxine 5'-phosphate synthase (249 aa).

Asn-7 serves as a coordination point for 3-amino-2-oxopropyl phosphate. 1-deoxy-D-xylulose 5-phosphate is bound at residue 9–10 (DH). Arg-18 lines the 3-amino-2-oxopropyl phosphate pocket. Residue His-43 is the Proton acceptor of the active site. The 1-deoxy-D-xylulose 5-phosphate site is built by Arg-45 and His-50. Residue Glu-70 is the Proton acceptor of the active site. Position 100 (Thr-100) interacts with 1-deoxy-D-xylulose 5-phosphate. His-198 acts as the Proton donor in catalysis. 3-amino-2-oxopropyl phosphate contacts are provided by residues Ala-199 and 220 to 221 (GH).

The protein belongs to the PNP synthase family. As to quaternary structure, homooctamer; tetramer of dimers.

The protein localises to the cytoplasm. The catalysed reaction is 3-amino-2-oxopropyl phosphate + 1-deoxy-D-xylulose 5-phosphate = pyridoxine 5'-phosphate + phosphate + 2 H2O + H(+). The protein operates within cofactor biosynthesis; pyridoxine 5'-phosphate biosynthesis; pyridoxine 5'-phosphate from D-erythrose 4-phosphate: step 5/5. Catalyzes the complicated ring closure reaction between the two acyclic compounds 1-deoxy-D-xylulose-5-phosphate (DXP) and 3-amino-2-oxopropyl phosphate (1-amino-acetone-3-phosphate or AAP) to form pyridoxine 5'-phosphate (PNP) and inorganic phosphate. The sequence is that of Pyridoxine 5'-phosphate synthase from Azoarcus sp. (strain BH72).